The chain runs to 366 residues: Inhibin alpha chain (366 aa).

Positions 1-20 (MVIQPSLLLLLLLTLQDVDS) are cleaved as a signal peptide. Residues 21–63 (CQGPELVRELVLAKVKALFLDALGPPAMDGEGGGPGIRRLPRR) constitute a propeptide that is removed on maturation. The propeptide at 64–233 (HALGGFMHRT…APSAGERARR (170 aa)) is inhibin alpha N-terminal region. Residues asparagine 147 and asparagine 269 are each glycosylated (N-linked (GlcNAc...) asparagine). Disulfide bonds link cysteine 263-cysteine 328, cysteine 292-cysteine 363, and cysteine 296-cysteine 365.

Belongs to the TGF-beta family. As to quaternary structure, dimeric, linked by one or more disulfide bonds. Activin B is a dimer of alpha and beta-B. Inhibin A is a dimer of alpha and beta-A. Inhibin B is a dimer of alpha and beta-B. Interacts with TGFBR3L; this interaction regulates female fertility. In terms of processing, proteolytic processing yields a number of bioactive forms, consisting either solely of the mature alpha chain, of the most N-terminal propeptide linked through a disulfide bond to the mature alpha chain, or of the entire proprotein. Mainly expressed in ovary and testis. Alpha- and beta-B-subunits are the predominant forms found in testis. Also found in placenta, pituitary, adrenal gland, bone marrow, kidney, spinal cord and brain.

The protein localises to the secreted. Inhibins and activins inhibit and activate, respectively, the secretion of follitropin by the pituitary gland. Inhibins/activins are involved in regulating a number of diverse functions such as hypothalamic and pituitary hormone secretion, gonadal hormone secretion, germ cell development and maturation, erythroid differentiation, insulin secretion, nerve cell survival, embryonic axial development or bone growth, depending on their subunit composition. Inhibins appear to oppose the functions of activins. Functionally, inhibin A is a dimer of alpha/INHA and beta-A/INHBA that functions as a feedback regulator in the hypothalamic-pituitary-gonadal (HPG) axis. Inhibits the secretion of FSH from the anterior pituitary gland by acting on pituitary gonadotrope cells. Antagonizes activin A by binding to the proteoglycan, betaglycan, and forming a stable complex with and, thereby, sequestering type II activin receptors while excluding type I receptor. In terms of biological role, inhibin B is a dimer of alpha and beta-B that plays a crucial role in the regulation of the reproductive system by inhibiting the secretion of follicle-stimulating hormone (FSH) from the anterior pituitary gland. Thereby, maintains reproductive homeostasis in both males and females. Acts as a more potent suppressor of FSH release than inhibin A. Functions as competitive receptor antagonist binding activin type II receptors with high affinity in the presence of the TGF-beta type III coreceptor/TGFBR3L. The polypeptide is Inhibin alpha chain (Inha) (Rattus norvegicus (Rat)).